Consider the following 543-residue polypeptide: Heparanase (543 aa).

A signal peptide spans 1 to 35; it reads MLLRSKPALPPPLMLLLLGPLGPLSPGALPRPAQA. Heparan sulfate group-binding positions include 62 to 64 and Thr97; that span reads DAN. Positions 110-157 are cleaved as a propeptide — linker peptide; that stretch reads STFEERSYWQSQVNQDICKYGSIPPDVEEKLRLEWPYQEQLLLREHYQ. Cysteines 127 and 179 form a disulfide. Position 158 to 162 (158 to 162) interacts with heparan sulfate group; that stretch reads KKFKN. 4 N-linked (GlcNAc...) asparagine glycosylation sites follow: Asn162, Asn178, Asn200, and Asn217. Catalysis depends on Glu225, which acts as the Proton donor. N-linked (GlcNAc...) asparagine glycosylation occurs at Asn238. Heparan sulfate group contacts are provided by residues 270–280, His296, and Arg303; that span reads QPRRKTAKMLK. Positions 288–417 are required for heterodimerization with the heparanase 8 kDa subunit; the sequence is EVIDSVTWHH…LLFKKLVGTK (130 aa). The active-site Nucleophile is Glu343. Heparan sulfate group is bound by residues 348–350 and 389–391; these read YGG and GNY. A disulfide bridge connects residues Cys437 and Cys542. N-linked (GlcNAc...) asparagine glycosylation occurs at Asn459. A required for transferring proheparanase to the Golgi apparatus, secretion and subsequent enzyme activity and for enhancement of PKB/AKT1 phosphorylation region spans residues 527-543; the sequence is FSYSFFVIRNAKVAACI.

Belongs to the glycosyl hydrolase 79 family. In terms of assembly, heterodimer; heterodimer formation between the 8 kDa and the 50 kDa subunits is required for enzyme activity. Interacts with TF; the interaction, inhibited by heparin, enhances the generation of activated factor X and activates coagulation. Interacts with HRG; the interaction is enhanced at acidic pH, partially inhibits binding of HPSE to cell surface receptors and modulates its enzymatic activity. Interacts with SDC1; the interaction enhances the shedding of SDC1. Interacts with HPSE2. Post-translationally, proteolytically processed. The cleavage of the 65 kDa form leads to the generation of a linker peptide, and 8 kDa and 50 kDa products. The active form, the 8/50 kDa heterodimer, is resistant to degradation. Complete removal of the linker peptide appears to be a prerequisite to the complete activation of the enzyme. N-glycosylated. Glycosylation of the 50 kDa subunit appears to be essential for its solubility. Highly expressed in placenta and spleen and weakly expressed in lymph node, thymus, peripheral blood leukocytes, bone marrow, endothelial cells, fetal liver and tumor tissues. Also expressed in hair follicles, specifically in both Henle's and Huxley's layers of inner the root sheath (IRS) at anagen phase.

The protein resides in the lysosome membrane. Its subcellular location is the secreted. It is found in the nucleus. It carries out the reaction endohydrolysis of (1-&gt;4)-beta-D-glycosidic bonds of heparan sulfate chains in heparan sulfate proteoglycan.. Its activity is regulated as follows. Inhibited by EDTA, laminarin sulfate and, to a lower extent, by heparin and sulfamin and activated by calcium and magnesium. In terms of biological role, endoglycosidase that cleaves heparan sulfate proteoglycans (HSPGs) into heparan sulfate side chains and core proteoglycans. Participates in extracellular matrix (ECM) degradation and remodeling. Selectively cleaves the linkage between a glucuronic acid unit and an N-sulfo glucosamine unit carrying either a 3-O-sulfo or a 6-O-sulfo group. Can also cleave the linkage between a glucuronic acid unit and an N-sulfo glucosamine unit carrying a 2-O-sulfo group, but not linkages between a glucuronic acid unit and a 2-O-sulfated iduronic acid moiety. It is essentially inactive at neutral pH but becomes active under acidic conditions such as during tumor invasion and in inflammatory processes. Facilitates cell migration associated with metastasis, wound healing and inflammation. Enhances shedding of syndecans, and increases endothelial invasion and angiogenesis in myelomas. Acts as a procoagulant by increasing the generation of activation factor X in the presence of tissue factor and activation factor VII. Increases cell adhesion to the extracellular matrix (ECM), independent of its enzymatic activity. Induces AKT1/PKB phosphorylation via lipid rafts increasing cell mobility and invasion. Heparin increases this AKT1/PKB activation. Regulates osteogenesis. Enhances angiogenesis through up-regulation of SRC-mediated activation of VEGF. Implicated in hair follicle inner root sheath differentiation and hair homeostasis. This Homo sapiens (Human) protein is Heparanase (HPSE).